The chain runs to 293 residues: Cell division protein FtsQ (293 aa).

Topologically, residues 1–29 (MSQVRSKSQQGKRQAKPQEVVPATILTEQ) are cytoplasmic. The helical transmembrane segment at 30-52 (LSTYAFGTVTAGAVMVAVAAWMG) threads the bilayer. Over 53 to 293 (GSLASIDERI…SQIDDKSGGA (241 aa)) the chain is Periplasmic. The 70-residue stretch at 75–144 (FTVTKISIEG…NDIWILAENR (70 aa)) folds into the POTRA domain.

Belongs to the FtsQ/DivIB family. FtsQ subfamily.

It is found in the cell inner membrane. Essential cell division protein. This chain is Cell division protein FtsQ, found in Hirschia baltica (strain ATCC 49814 / DSM 5838 / IFAM 1418).